Reading from the N-terminus, the 219-residue chain is Protein RhiB (219 aa).

Residues 174 to 195 show a composition bias toward polar residues; that stretch reads AGISQQGNAAGTSISSKSTGSP. Residues 174–201 form a disordered region; it reads AGISQQGNAAGTSISSKSTGSPENPART.

Its function is as follows. May be involved in plant-microbe interaction. In Rhizobium leguminosarum bv. viciae, this protein is Protein RhiB (rhiB).